Consider the following 323-residue polypeptide: Acetyl esterase (323 aa).

Positions 91–93 (HGG) match the Involved in the stabilization of the negatively charged intermediate by the formation of the oxyanion hole motif. Catalysis depends on residues serine 165, aspartate 262, and histidine 292.

The protein belongs to the 'GDXG' lipolytic enzyme family. In terms of assembly, homodimer. Interacts with MalT and MelA.

The protein resides in the cytoplasm. Its function is as follows. Displays esterase activity towards short chain fatty esters (acyl chain length of up to 8 carbons). Able to hydrolyze triacetylglycerol (triacetin) and tributyrylglycerol (tributyrin), but not trioleylglycerol (triolein) or cholesterol oleate. Negatively regulates MalT activity by antagonizing maltotriose binding. Inhibits MelA galactosidase activity. This chain is Acetyl esterase, found in Salmonella agona (strain SL483).